Here is a 735-residue protein sequence, read N- to C-terminus: Alpha-adducin (735 aa).

M1 bears the N-acetylmethionine mark. Low complexity predominate over residues M1–T11. Positions M1–K21 are disordered. A phosphoserine mark is found at S12, S59, and S64. The residue at position 331 (T331) is a Phosphothreonine. Phosphoserine is present on residues S334, S353, and S355. T358 bears the Phosphothreonine mark. Phosphoserine is present on residues S364, S366, S408, and S427. Disordered stretches follow at residues G418–N487 and R576–S735. A Phosphothreonine modification is found at T429. Residues S431 and S436 each carry the phosphoserine modification. Basic and acidic residues predominate over residues Q440 to D455. Phosphothreonine; by ROCK2 is present on T445. A phosphoserine mark is found at S464 and S465. At T480 the chain carries Phosphothreonine; by ROCK2. S481 carries the post-translational modification Phosphoserine; by PKA. The span at R576–P601 shows a compositional bias: basic and acidic residues. Residues S586, S600, and S605 each carry the phosphoserine modification. T610 carries the post-translational modification Phosphothreonine. S613 is subject to Phosphoserine. The residue at position 614 (T614) is a Phosphothreonine. The segment covering G698–S712 has biased composition (low complexity). A phosphoserine mark is found at S705, S708, and S712. Over residues P713–S735 the composition is skewed to basic residues. Phosphoserine; by PKC is present on S714. Positions K715–K732 are interaction with calmodulin. The residue at position 724 (S724) is a Phosphoserine; by PKA and PKC.

Belongs to the aldolase class II family. Adducin subfamily. In terms of assembly, heterodimer of an alpha and a beta subunit or an alpha and a gamma subunit.

Its subcellular location is the cytoplasm. The protein resides in the cytoskeleton. The protein localises to the cell membrane. Membrane-cytoskeleton-associated protein that promotes the assembly of the spectrin-actin network. Binds to calmodulin. This chain is Alpha-adducin (Add1), found in Mus musculus (Mouse).